Consider the following 247-residue polypeptide: Trypsin (247 aa).

Positions 1-21 (LTTVISYFALVAFALVGVSYA) are cleaved as a signal peptide. A propeptide spans 22-30 (TPKASINGR) (activation peptide). A Peptidase S1 domain is found at 31 to 247 (IVGGEMTDIS…QSNFPGVYGI (217 aa)). C61 and C77 are joined by a disulfide. Catalysis depends on charge relay system residues H76 and D120. 2 disulfide bridges follow: C185/C201 and C212/C236. S216 acts as the Charge relay system in catalysis.

This sequence belongs to the peptidase S1 family. Midgut.

Its subcellular location is the secreted. It is found in the extracellular space. The catalysed reaction is Preferential cleavage: Arg-|-Xaa, Lys-|-Xaa.. The sequence is that of Trypsin from Simulium vittatum (Striped black fly).